Consider the following 267-residue polypeptide: 4-diphosphocytidyl-2-C-methyl-D-erythritol kinase (267 aa).

Lys-8 is an active-site residue. Pro-90–Ser-100 contacts ATP. Asp-132 is an active-site residue.

This sequence belongs to the GHMP kinase family. IspE subfamily.

It carries out the reaction 4-CDP-2-C-methyl-D-erythritol + ATP = 4-CDP-2-C-methyl-D-erythritol 2-phosphate + ADP + H(+). It participates in isoprenoid biosynthesis; isopentenyl diphosphate biosynthesis via DXP pathway; isopentenyl diphosphate from 1-deoxy-D-xylulose 5-phosphate: step 3/6. Functionally, catalyzes the phosphorylation of the position 2 hydroxy group of 4-diphosphocytidyl-2C-methyl-D-erythritol. The chain is 4-diphosphocytidyl-2-C-methyl-D-erythritol kinase from Azobacteroides pseudotrichonymphae genomovar. CFP2.